The chain runs to 245 residues: Uridylate kinase (245 aa).

16–19 contributes to the ATP binding site; sequence KLSG. A UMP-binding site is contributed by Gly-58. Gly-59 and Arg-63 together coordinate ATP. UMP-binding positions include Asp-78 and 139-146; that span reads TGNPFFTT. Residues Thr-166, Tyr-172, and Asp-175 each contribute to the ATP site.

The protein belongs to the UMP kinase family. Homohexamer.

It is found in the cytoplasm. The enzyme catalyses UMP + ATP = UDP + ADP. Its pathway is pyrimidine metabolism; CTP biosynthesis via de novo pathway; UDP from UMP (UMPK route): step 1/1. Inhibited by UTP. Its function is as follows. Catalyzes the reversible phosphorylation of UMP to UDP. The polypeptide is Uridylate kinase (Idiomarina loihiensis (strain ATCC BAA-735 / DSM 15497 / L2-TR)).